Consider the following 183-residue polypeptide: Ribulose bisphosphate carboxylase small subunit, chloroplastic (183 aa).

A chloroplast-targeting transit peptide spans 1–58 (MASSMLSTAAVACINRASPAQASMVAPFTGLKSTSAFPTTRKTTTDITSIASNGGRVQ).

Belongs to the RuBisCO small chain family. In terms of assembly, heterohexadecamer of 8 large and 8 small subunits.

It localises to the plastid. Its subcellular location is the chloroplast. In terms of biological role, ruBisCO catalyzes two reactions: the carboxylation of D-ribulose 1,5-bisphosphate, the primary event in carbon dioxide fixation, as well as the oxidative fragmentation of the pentose substrate. Both reactions occur simultaneously and in competition at the same active site. Although the small subunit is not catalytic it is essential for maximal activity. This chain is Ribulose bisphosphate carboxylase small subunit, chloroplastic, found in Hevea brasiliensis (Para rubber tree).